The primary structure comprises 124 residues: MASILNTLRFLEKTSFYNCNDSITKEKIKIKHKGMSFVFYKPKHSTVVKYLSGGGIYHDDLVVLGKVTINDLKMMLFYMDLSYHGVTSSGVIYKLGSSIDRLSLNRTIVTKVNNYDDTFFDDDD.

This sequence belongs to the orthopoxvirus OPG159 protein family.

The sequence is that of Protein OPG159 (OPG159) from Homo sapiens (Human).